We begin with the raw amino-acid sequence, 669 residues long: DNA ligase (669 aa).

Residues D34 to D38, S83 to L84, and E114 each bind NAD(+). Residue K116 is the N6-AMP-lysine intermediate of the active site. NAD(+) contacts are provided by R137, E171, K287, and K311. Zn(2+) is bound by residues C405, C408, C423, and C428. Positions N591–K669 constitute a BRCT domain.

It belongs to the NAD-dependent DNA ligase family. LigA subfamily. Mg(2+) serves as cofactor. Mn(2+) is required as a cofactor.

The enzyme catalyses NAD(+) + (deoxyribonucleotide)n-3'-hydroxyl + 5'-phospho-(deoxyribonucleotide)m = (deoxyribonucleotide)n+m + AMP + beta-nicotinamide D-nucleotide.. DNA ligase that catalyzes the formation of phosphodiester linkages between 5'-phosphoryl and 3'-hydroxyl groups in double-stranded DNA using NAD as a coenzyme and as the energy source for the reaction. It is essential for DNA replication and repair of damaged DNA. The protein is DNA ligase of Bacillus cereus (strain ATCC 10987 / NRS 248).